The chain runs to 298 residues: Lipoyl synthase (298 aa).

7 residues coordinate [4Fe-4S] cluster: Cys40, Cys45, Cys51, Cys67, Cys71, Cys74, and Ser280. The 217-residue stretch at 53–269 (AVRKTATFMI…KEIALSKGFS (217 aa)) folds into the Radical SAM core domain.

This sequence belongs to the radical SAM superfamily. Lipoyl synthase family. The cofactor is [4Fe-4S] cluster.

It localises to the cytoplasm. The catalysed reaction is [[Fe-S] cluster scaffold protein carrying a second [4Fe-4S](2+) cluster] + N(6)-octanoyl-L-lysyl-[protein] + 2 oxidized [2Fe-2S]-[ferredoxin] + 2 S-adenosyl-L-methionine + 4 H(+) = [[Fe-S] cluster scaffold protein] + N(6)-[(R)-dihydrolipoyl]-L-lysyl-[protein] + 4 Fe(3+) + 2 hydrogen sulfide + 2 5'-deoxyadenosine + 2 L-methionine + 2 reduced [2Fe-2S]-[ferredoxin]. It participates in protein modification; protein lipoylation via endogenous pathway; protein N(6)-(lipoyl)lysine from octanoyl-[acyl-carrier-protein]. Functionally, catalyzes the radical-mediated insertion of two sulfur atoms into the C-6 and C-8 positions of the octanoyl moiety bound to the lipoyl domains of lipoate-dependent enzymes, thereby converting the octanoylated domains into lipoylated derivatives. In Bacillus cereus (strain G9842), this protein is Lipoyl synthase.